Consider the following 1463-residue polypeptide: Probable oxidoreductase PXDNL (1463 aa).

Positions 1 to 23 (MEPRLFCWTTLFLLAGWCLPGLP) are cleaved as a signal peptide. In terms of domain architecture, LRRNT spans 24–50 (CPSRCLCFKSTVRCMHLMLDHIPQVPQ). LRR repeat units lie at residues 51–72 (QTTVLDLRFNRIREIPGSAFKK), 75–96 (NLNTLLLNNNHIRKISRNAFEG), 99–120 (NLLYLYLYKNEIHALDKQTFKG), 123–144 (SLEHLYIHFNQLEMLQPETFGD), and 147–168 (RLERLFLHNNKLSKIPAGSFSN). An LRRCT domain is found at 180–233 (NALVCDCDLMWLGELLQGFAQHGHTQAAATCEYPRRLHGRAVASVTVEEFNCQS). 4 Ig-like C2-type domains span residues 234-322 (PRIT…AMLR), 330-414 (PSFV…ANII), 419-504 (PQFT…VQLT), and 507-596 (PKAL…MFLT). 5 disulfide bridges follow: C255/C305, C351/C398, C440/C488, C532/C580, and C718/C734. N387 carries an N-linked (GlcNAc...) asparagine glycan. The active-site Proton acceptor is H812. D813 contacts Ca(2+). Disulfide bonds link C832–C842 and C836–C859. Positions 891, 893, 895, and 897 each coordinate Ca(2+). C944 and C953 are oxidised to a cystine. H1057 is a binding site for heme b. Cystine bridges form between C1160/C1217 and C1258/C1284. Residues 1393–1451 (AGCTDVRGVPRKAEERWMKEDCTHCICESGQVTCVVEICPPAPCPSPELVKGTCCPVCR) enclose the VWFC domain.

This sequence belongs to the peroxidase family. XPO subfamily. As to quaternary structure, interacts with PXDN; this interaction inhibits the peroxidase activity of PXDN. The cofactor is heme b. In terms of processing, phosphorylation by SRC on tyrosine residues is required for targeting to polysomes. In terms of tissue distribution, the 57 kDa isoform PMR1 is the only form detected at protein levels in human cell lines. Expressed in heart.

The protein localises to the secreted. The protein resides in the endoplasmic reticulum. It localises to the cell membrane. Its subcellular location is the cytoplasm. In terms of biological role, probable oxidoreductase. Lacks peroxidase activity. Inhibits the peroxidase activity of PXDN through its interaction. Functionally, endonuclease selectively degrading some target mRNAs while they are engaged by translating ribosomes, among which albumin and beta-globin mRNAs. In Homo sapiens (Human), this protein is Probable oxidoreductase PXDNL.